The sequence spans 206 residues: ATP phosphoribosyltransferase (206 aa).

Belongs to the ATP phosphoribosyltransferase family. Short subfamily. As to quaternary structure, heteromultimer composed of HisG and HisZ subunits.

The protein resides in the cytoplasm. It carries out the reaction 1-(5-phospho-beta-D-ribosyl)-ATP + diphosphate = 5-phospho-alpha-D-ribose 1-diphosphate + ATP. The protein operates within amino-acid biosynthesis; L-histidine biosynthesis; L-histidine from 5-phospho-alpha-D-ribose 1-diphosphate: step 1/9. Catalyzes the condensation of ATP and 5-phosphoribose 1-diphosphate to form N'-(5'-phosphoribosyl)-ATP (PR-ATP). Has a crucial role in the pathway because the rate of histidine biosynthesis seems to be controlled primarily by regulation of HisG enzymatic activity. This Leptospira interrogans serogroup Icterohaemorrhagiae serovar copenhageni (strain Fiocruz L1-130) protein is ATP phosphoribosyltransferase.